A 677-amino-acid polypeptide reads, in one-letter code: Methionine--tRNA ligase (677 aa).

Positions 15 to 25 match the 'HIGH' region motif; the sequence is PYANGSIHLGH. Zn(2+) is bound by residues C146, C149, C159, and C162. The 'KMSKS' region motif lies at 333 to 337; that stretch reads KMSKS. K336 lines the ATP pocket. The 103-residue stretch at 575 to 677 folds into the tRNA-binding domain; it reads DFAKIDLRVA…DGAKPGQQVK (103 aa).

It belongs to the class-I aminoacyl-tRNA synthetase family. MetG type 1 subfamily. In terms of assembly, homodimer. The cofactor is Zn(2+).

It is found in the cytoplasm. The catalysed reaction is tRNA(Met) + L-methionine + ATP = L-methionyl-tRNA(Met) + AMP + diphosphate. Functionally, is required not only for elongation of protein synthesis but also for the initiation of all mRNA translation through initiator tRNA(fMet) aminoacylation. The polypeptide is Methionine--tRNA ligase (Salmonella paratyphi B (strain ATCC BAA-1250 / SPB7)).